A 667-amino-acid polypeptide reads, in one-letter code: Protein angel homolog 1 (667 aa).

Residues serine 77 and serine 105 each carry the phosphoserine modification.

It belongs to the CCR4/nocturin family.

This chain is Protein angel homolog 1, found in Mus musculus (Mouse).